The sequence spans 334 residues: Ketol-acid reductoisomerase (NADP(+)) (334 aa).

The KARI N-terminal Rossmann domain maps to 3–183 (ATIYYENDAD…GGTRGGVIET (181 aa)). Residues 26-29 (YGSQ), R49, S52, and 84-87 (DEVQ) contribute to the NADP(+) site. Residue H109 is part of the active site. G135 is a binding site for NADP(+). In terms of domain architecture, KARI C-terminal knotted spans 184–329 (TFAEETETDL…LGLRRMMNWI (146 aa)). 4 residues coordinate Mg(2+): D192, E196, E228, and E232. S253 is a substrate binding site.

This sequence belongs to the ketol-acid reductoisomerase family. Mg(2+) serves as cofactor.

It catalyses the reaction (2R)-2,3-dihydroxy-3-methylbutanoate + NADP(+) = (2S)-2-acetolactate + NADPH + H(+). The enzyme catalyses (2R,3R)-2,3-dihydroxy-3-methylpentanoate + NADP(+) = (S)-2-ethyl-2-hydroxy-3-oxobutanoate + NADPH + H(+). Its pathway is amino-acid biosynthesis; L-isoleucine biosynthesis; L-isoleucine from 2-oxobutanoate: step 2/4. The protein operates within amino-acid biosynthesis; L-valine biosynthesis; L-valine from pyruvate: step 2/4. In terms of biological role, involved in the biosynthesis of branched-chain amino acids (BCAA). Catalyzes an alkyl-migration followed by a ketol-acid reduction of (S)-2-acetolactate (S2AL) to yield (R)-2,3-dihydroxy-isovalerate. In the isomerase reaction, S2AL is rearranged via a Mg-dependent methyl migration to produce 3-hydroxy-3-methyl-2-ketobutyrate (HMKB). In the reductase reaction, this 2-ketoacid undergoes a metal-dependent reduction by NADPH to yield (R)-2,3-dihydroxy-isovalerate. The protein is Ketol-acid reductoisomerase (NADP(+)) of Rhodopirellula baltica (strain DSM 10527 / NCIMB 13988 / SH1).